Consider the following 461-residue polypeptide: Spermidine coumaroyl-CoA acyltransferase (461 aa).

Residues His168 and Asp393 each act as proton acceptor in the active site.

Belongs to the plant acyltransferase family. In terms of assembly, monomer. Mainly expressed in roots at low levels, specifically, in the root tip.

The enzyme catalyses 2 (E)-4-coumaroyl-CoA + spermidine = N(1),N(8)-bis(coumaroyl)-spermidine + 2 CoA + 2 H(+). The protein operates within amine and polyamine metabolism; spermidine metabolism. In terms of biological role, spermidine coumaroyl-CoA acyltransferase that mediates the conversion of spermidine into dicoumaroyl-spermidine. This chain is Spermidine coumaroyl-CoA acyltransferase, found in Arabidopsis thaliana (Mouse-ear cress).